Here is a 153-residue protein sequence, read N- to C-terminus: MKTFVLHIFIFALVAFASASRDSAKKIGSQYDNYETCLTEHGLTDDDIFSIGEVSSGQHKTNHEDTELHKNGCVMQCMLEKDGLMSGADYDEEKMREDYIKETGAQPGDQRIEALNACMQETKDMEDKCDKSLILVACVLAAEVVLADSSEGA.

The signal sequence occupies residues 1–19 (MKTFVLHIFIFALVAFASA). Cystine bridges form between Cys37/Cys77, Cys73/Cys129, and Cys118/Cys138.

It belongs to the PBP/GOBP family. In terms of assembly, homodimer.

Its subcellular location is the secreted. Functionally, colony queen number, a major feature of social organization, is associated with worker genotype for Gp-9. Colonies are headed by either a single reproductive queen (monogyne form) or multiple queens (polygyne form). Differences in worker Gp-9 genotypes between social forms may cause differences in workers' abilities to recognize queens and regulate their numbers. In Solenopsis substituta (Fire ant), this protein is Pheromone-binding protein Gp-9.